The chain runs to 110 residues: Large ribosomal subunit protein uL24 (110 aa).

It belongs to the universal ribosomal protein uL24 family. In terms of assembly, part of the 50S ribosomal subunit.

Functionally, one of two assembly initiator proteins, it binds directly to the 5'-end of the 23S rRNA, where it nucleates assembly of the 50S subunit. One of the proteins that surrounds the polypeptide exit tunnel on the outside of the subunit. This chain is Large ribosomal subunit protein uL24, found in Thermus thermophilus (strain ATCC BAA-163 / DSM 7039 / HB27).